Here is a 319-residue protein sequence, read N- to C-terminus: Beta-ketoacyl-[acyl-carrier-protein] synthase III (319 aa).

Catalysis depends on residues Cys110 and His246. Positions 247 to 251 (QANYR) are ACP-binding. Residue Asn276 is part of the active site.

It belongs to the thiolase-like superfamily. FabH family. Homodimer.

The protein localises to the cytoplasm. It catalyses the reaction malonyl-[ACP] + acetyl-CoA + H(+) = 3-oxobutanoyl-[ACP] + CO2 + CoA. It participates in lipid metabolism; fatty acid biosynthesis. Its function is as follows. Catalyzes the condensation reaction of fatty acid synthesis by the addition to an acyl acceptor of two carbons from malonyl-ACP. Catalyzes the first condensation reaction which initiates fatty acid synthesis and may therefore play a role in governing the total rate of fatty acid production. Possesses both acetoacetyl-ACP synthase and acetyl transacylase activities. Its substrate specificity determines the biosynthesis of branched-chain and/or straight-chain of fatty acids. The sequence is that of Beta-ketoacyl-[acyl-carrier-protein] synthase III from Lactobacillus delbrueckii subsp. bulgaricus (strain ATCC BAA-365 / Lb-18).